Reading from the N-terminus, the 342-residue chain is Isopentenyl-diphosphate delta-isomerase (342 aa).

12 to 13 (RK) serves as a coordination point for substrate. Residues 71 to 73 (AMT), Ser101, and Asn129 contribute to the FMN site. 101 to 103 (SQR) is a binding site for substrate. Gln163 is a binding site for substrate. Glu164 provides a ligand contact to Mg(2+). FMN contacts are provided by residues Lys195, Thr225, 272–274 (GIR), and 293–294 (AR).

The protein belongs to the IPP isomerase type 2 family. In terms of assembly, homooctamer. Dimer of tetramers. FMN serves as cofactor. NADPH is required as a cofactor. It depends on Mg(2+) as a cofactor.

It is found in the cytoplasm. The enzyme catalyses isopentenyl diphosphate = dimethylallyl diphosphate. Involved in the biosynthesis of isoprenoids. Catalyzes the 1,3-allylic rearrangement of the homoallylic substrate isopentenyl (IPP) to its allylic isomer, dimethylallyl diphosphate (DMAPP). This Mycolicibacterium vanbaalenii (strain DSM 7251 / JCM 13017 / BCRC 16820 / KCTC 9966 / NRRL B-24157 / PYR-1) (Mycobacterium vanbaalenii) protein is Isopentenyl-diphosphate delta-isomerase.